A 505-amino-acid chain; its full sequence is Maturase K (505 aa).

The protein belongs to the intron maturase 2 family. MatK subfamily.

The protein localises to the plastid. It localises to the chloroplast. Usually encoded in the trnK tRNA gene intron. Probably assists in splicing its own and other chloroplast group II introns. This chain is Maturase K, found in Ulmus parvifolia (Chinese elm).